The following is a 173-amino-acid chain: Photosystem I assembly protein Ycf3 (173 aa).

TPR repeat units follow at residues 35-68 (AYVY…EENS), 72-105 (SETL…NPNQ), and 120-153 (GRIA…NPGG).

It belongs to the Ycf3 family.

It localises to the cellular thylakoid membrane. Its function is as follows. Essential for the assembly of the photosystem I (PSI) complex. May act as a chaperone-like factor to guide the assembly of the PSI subunits. This chain is Photosystem I assembly protein Ycf3, found in Synechococcus sp. (strain CC9605).